Here is a 504-residue protein sequence, read N- to C-terminus: Transcriptional coactivator YAP1 (504 aa).

Pro residues-rich tracts occupy residues 1–12 (MDPGQQPPPQPA) and 20–36 (PSQP…PGQP). A disordered region spans residues 1-59 (MDPGQQPPPQPAPQGQGQPPSQPPQGQGPPSGPGQPAPAATQAAPQAPPAGHQIVHVRG). Low complexity predominate over residues 37 to 51 (APAATQAAPQAPPAG). Phosphoserine; by LATS1 and LATS2 is present on serine 61. Threonine 63 carries the post-translational modification Phosphothreonine. The stretch at 86 to 100 (MRLRKLPDSFFKPPE) forms a coiled coil. Lysine 90 carries the N6-lactoyllysine modification. Positions 91–114 (LPDSFFKPPEPKSHSRQASTDAGT) are disordered. Serine 105 bears the Phosphoserine mark. A Phosphoserine; by LATS1 and LATS2 modification is found at serine 109. At threonine 110 the chain carries Phosphothreonine. Residue threonine 119 is modified to Phosphothreonine; by MAPK8 and MAPK9. Residue serine 127 is modified to Phosphoserine; by LATS1 and LATS2. Phosphoserine is present on residues serine 128 and serine 131. The interval 133–158 (QLGAVSPGTLTPTGVVSGPAATPTAQ) is disordered. The residue at position 138 (serine 138) is a Phosphoserine; by MAPK8 and MAPK9. Residue threonine 154 is modified to Phosphothreonine; by MAPK8 and MAPK9. Position 164 is a phosphoserine; by LATS1 and LATS2 (serine 164). WW domains follow at residues 171–204 (VPLP…DPRK) and 230–263 (GPLP…DPRL). A phosphoserine mark is found at serine 274 and serine 289. Disordered stretches follow at residues 275–309 (QSAP…MRLQ) and 355–407 (LEQD…MSSY). The segment at 291-504 (QGGVMGGSNS…LDKESFLTWL (214 aa)) is transactivation domain. Residues 298–359 (SNSNQQQQMR…SQLPTLEQDG (62 aa)) adopt a coiled-coil conformation. A compositionally biased stretch (polar residues) spans 355–391 (LEQDGGTQNPVSSPGMSQELRTMTTNSSDPFLNSGTY). Residue serine 367 is modified to Phosphoserine; by MAPK8 and MAPK9. Phosphoserine occurs at positions 371, 381, 382, and 388. Phosphoserine; by LATS1 and LATS2 is present on serine 397. Phosphoserine; by CK1 is present on residues serine 400 and serine 403. The residue at position 407 (tyrosine 407) is a Phosphotyrosine; by ABL1. Threonine 412 is subject to Phosphothreonine; by MAPK8 and MAPK9.

This sequence belongs to the YAP1 family. As to quaternary structure, part of a complex when phosphorylated that contains DSG3, PKP1, YAP1 and YWHAG; the complex is required for localization of DSG3 and YAP1 to the cell membrane in keratinocytes. Binds to the SH3 domain of the YES kinase. Binds to WBP1 and WBP2. Binds, in vitro, through the WW1 domain, to neural isoforms of ENAH that contain the PPSY motif. The phosphorylated form interacts with YWHAB. Interacts (via WW domains) with LATS1 (via PPxY motif 2). Interacts with LATS2. Interacts with TEAD1, TEAD2, TEAD3 and TEAD4. Interacts with TP73. Interacts with RUNX1. Interacts with HCK. Interacts (via WW domains) with PTPN14 (via PPxY motif 2); this interaction leads to the cytoplasmic sequestration of YAP1 and inhibits its transcriptional coactivator activity. Interacts (when phosphorylated at Ser-127) with SMAD2, SMAD3 and WWTR1. Interacts with PRRG2 (via cytoplasmic domain). Interacts (via WW domains) with PRRG4 (via cytoplasmic domain). Interacts (phosphorylated) with CLDN18; the interaction sequesters YAP1 away from the nucleus and thereby restricts transcription of YAP1 target genes. Interacts with SMAD1. Interacts with AMOTL2, the interaction is required for ubiquitination of AMOTL2 and localization of YAP1 to tight junctions. Interacts with AMOT isoform 1; the interaction facilitates translocation of YAP1 to the cytoplasm and tight junctions. Interacts (via WW domain 1) with isoform 3 of ERBB4 (via PPxY motif 2). Phosphorylated by LATS1 and LATS2; leading to cytoplasmic translocation and inactivation. Phosphorylated by ABL1; leading to YAP1 stabilization, enhanced interaction with TP73 and recruitment onto proapoptotic genes; in response to DNA damage. Phosphorylation at Ser-400 and Ser-403 by CK1 is triggered by previous phosphorylation at Ser-397 by LATS proteins and leads to YAP1 ubiquitination by SCF(beta-TRCP) E3 ubiquitin ligase and subsequent degradation. Phosphorylated at Thr-119, Ser-138, Thr-154, Ser-367 and Thr-412 by MAPK8/JNK1 and MAPK9/JNK2, which is required for the regulation of apoptosis by YAP1. Phosphorylated in the nucleus by PRP4K; phosphorylation leads to nuclear exclusion. Post-translationally, lactylation by AARS1 promotes nuclear localization and stabilization of YAP1, leading to increased Hippo signaling pathway. Delactylated by SIRT1. In terms of processing, ubiquitinated by SCF(beta-TRCP) E3 ubiquitin ligase. Increased expression seen in some liver and prostate cancers. Isoforms lacking the transactivation domain found in striatal neurons of patients with Huntington disease (at protein level).

It localises to the cytoplasm. It is found in the nucleus. Its subcellular location is the cell junction. The protein resides in the tight junction. The protein localises to the cell membrane. In terms of biological role, transcriptional regulator with dual roles as a coactivator and corepressor. Critical downstream regulatory target in the Hippo signaling pathway, crucial for organ size control and tumor suppression by restricting proliferation and promoting apoptosis. The Hippo signaling pathway core involves a kinase cascade featuring STK3/MST2 and STK4/MST1, along with its regulatory partner SAV1, which phosphorylates and activates LATS1/2 in complex with their regulatory protein, MOB1. This activation leads to the phosphorylation and inactivation of the YAP1 oncoprotein and WWTR1/TAZ. Phosphorylation of YAP1 by LATS1/2 prevents its nuclear translocation, thereby regulating the expression of its target genes. The transcriptional regulation of gene expression requires TEAD transcription factors and modulates cell growth, anchorage-independent growth, and induction of epithelial-mesenchymal transition (EMT). Plays a key role in tissue tension and 3D tissue shape by regulating the cortical actomyosin network, acting via ARHGAP18, a Rho GTPase activating protein that suppresses F-actin polymerization. It also suppresses ciliogenesis by acting as a transcriptional corepressor of TEAD4 target genes AURKA and PLK1. In conjunction with WWTR1, regulates TGFB1-dependent SMAD2 and SMAD3 nuclear accumulation. Synergizes with WBP2 to enhance PGR activity. Its function is as follows. Activates the C-terminal fragment (CTF) of ERBB4 (isoform 3). This Homo sapiens (Human) protein is Transcriptional coactivator YAP1.